The chain runs to 446 residues: Serum factor response D (446 aa).

The MADS-box domain occupies 1–61 (MGRKKIKIQR…PNAKEKYFQY (61 aa)). Disordered regions lie at residues 95 to 195 (KKEK…FNSS), 210 to 296 (TQEN…CQQV), and 319 to 432 (CSSP…SNLN). The segment covering 112-121 (SHSEEEDHKS) has biased composition (basic and acidic residues). Over residues 133–142 (HHNHHHHHHQ) the composition is skewed to basic residues. Composition is skewed to low complexity over residues 143–195 (YNNN…FNSS) and 216–282 (HYNN…NNNN). A compositionally biased stretch (polar residues) spans 322 to 355 (PEDTSPMTSPRTPPFSSTNTNTLQTSPNSQQKSK). The span at 365–432 (NNNQNNNNQN…SPTSSSSNLN (68 aa)) shows a compositional bias: low complexity.

It is found in the nucleus. This is Serum factor response D (srfD) from Dictyostelium discoideum (Social amoeba).